Consider the following 135-residue polypeptide: Protein NrdI (135 aa).

The protein belongs to the NrdI family.

Its function is as follows. Probably involved in ribonucleotide reductase function. The chain is Protein NrdI from Pectobacterium carotovorum subsp. carotovorum (strain PC1).